Reading from the N-terminus, the 229-residue chain is Ribonuclease HII (229 aa).

The RNase H type-2 domain occupies 34-223 (WPVAGADEAG…LRKTENGPET (190 aa)). Residues aspartate 40, glutamate 41, and aspartate 131 each contribute to the a divalent metal cation site. The tract at residues 209 to 229 (MSFRPLRKTENGPETDELLSE) is disordered.

The protein belongs to the RNase HII family. It depends on Mn(2+) as a cofactor. The cofactor is Mg(2+).

It is found in the cytoplasm. It catalyses the reaction Endonucleolytic cleavage to 5'-phosphomonoester.. Endonuclease that specifically degrades the RNA of RNA-DNA hybrids. The protein is Ribonuclease HII of Rhizobium johnstonii (strain DSM 114642 / LMG 32736 / 3841) (Rhizobium leguminosarum bv. viciae).